A 129-amino-acid polypeptide reads, in one-letter code: Glycine cleavage system H protein (129 aa).

A Lipoyl-binding domain is found at 23–104; that stretch reads SVTVGITHHA…AYTAWLFKIK (82 aa). Lysine 64 is modified (N6-lipoyllysine).

This sequence belongs to the GcvH family. The glycine cleavage system is composed of four proteins: P, T, L and H. (R)-lipoate serves as cofactor.

Its function is as follows. The glycine cleavage system catalyzes the degradation of glycine. The H protein shuttles the methylamine group of glycine from the P protein to the T protein. This Thiobacillus denitrificans (strain ATCC 25259 / T1) protein is Glycine cleavage system H protein.